We begin with the raw amino-acid sequence, 125 residues long: Large ribosomal subunit protein bL19 (125 aa).

Belongs to the bacterial ribosomal protein bL19 family.

In terms of biological role, this protein is located at the 30S-50S ribosomal subunit interface and may play a role in the structure and function of the aminoacyl-tRNA binding site. The polypeptide is Large ribosomal subunit protein bL19 (Synechococcus sp. (strain JA-2-3B'a(2-13)) (Cyanobacteria bacterium Yellowstone B-Prime)).